Here is a 236-residue protein sequence, read N- to C-terminus: Ubiquinone biosynthesis O-methyltransferase (236 aa).

S-adenosyl-L-methionine is bound by residues R36, G60, D81, and L123.

The protein belongs to the methyltransferase superfamily. UbiG/COQ3 family.

The catalysed reaction is a 3-demethylubiquinol + S-adenosyl-L-methionine = a ubiquinol + S-adenosyl-L-homocysteine + H(+). It catalyses the reaction a 3-(all-trans-polyprenyl)benzene-1,2-diol + S-adenosyl-L-methionine = a 2-methoxy-6-(all-trans-polyprenyl)phenol + S-adenosyl-L-homocysteine + H(+). It functions in the pathway cofactor biosynthesis; ubiquinone biosynthesis. Its function is as follows. O-methyltransferase that catalyzes the 2 O-methylation steps in the ubiquinone biosynthetic pathway. The chain is Ubiquinone biosynthesis O-methyltransferase from Rickettsia canadensis (strain McKiel).